The sequence spans 258 residues: Imidazole glycerol phosphate synthase subunit HisF (258 aa).

Residues aspartate 11 and aspartate 130 contribute to the active site.

This sequence belongs to the HisA/HisF family. In terms of assembly, heterodimer of HisH and HisF.

It localises to the cytoplasm. The catalysed reaction is 5-[(5-phospho-1-deoxy-D-ribulos-1-ylimino)methylamino]-1-(5-phospho-beta-D-ribosyl)imidazole-4-carboxamide + L-glutamine = D-erythro-1-(imidazol-4-yl)glycerol 3-phosphate + 5-amino-1-(5-phospho-beta-D-ribosyl)imidazole-4-carboxamide + L-glutamate + H(+). Its pathway is amino-acid biosynthesis; L-histidine biosynthesis; L-histidine from 5-phospho-alpha-D-ribose 1-diphosphate: step 5/9. IGPS catalyzes the conversion of PRFAR and glutamine to IGP, AICAR and glutamate. The HisF subunit catalyzes the cyclization activity that produces IGP and AICAR from PRFAR using the ammonia provided by the HisH subunit. In Xanthomonas oryzae pv. oryzae (strain MAFF 311018), this protein is Imidazole glycerol phosphate synthase subunit HisF.